Consider the following 434-residue polypeptide: N-lysine methyltransferase SMYD2-B (434 aa).

Residues 8 to 242 (PGIEQFASPG…PGQEIYTSYI (235 aa)) enclose the SET domain. 18-20 (KGR) is an S-adenosyl-L-methionine binding site. Residues Cys-53, Cys-56, Cys-66, Cys-69, Cys-75, Cys-79, His-87, and Cys-91 each coordinate Zn(2+). The MYND-type zinc finger occupies 53–91 (CEQCFTRKKGLAKCGKCKKAFYCNANCQKKNWPMHKLEC). S-adenosyl-L-methionine is bound by residues His-138, 207 to 208 (NH), and 259 to 261 (YYF).

Belongs to the class V-like SAM-binding methyltransferase superfamily.

The protein localises to the cytoplasm. It localises to the cytosol. Its subcellular location is the nucleus. It carries out the reaction L-lysyl(4)-[histone H3] + 3 S-adenosyl-L-methionine = N(6),N(6),N(6)-trimethyl-L-lysyl(4)-[histone H3] + 3 S-adenosyl-L-homocysteine + 3 H(+). It catalyses the reaction L-lysyl-[protein] + S-adenosyl-L-methionine = N(6)-methyl-L-lysyl-[protein] + S-adenosyl-L-homocysteine + H(+). Protein-lysine N-methyltransferase that methylates both histones and non-histone proteins, including p53/TP53 and RB1. Specifically trimethylates histone H3 'Lys-4' (H3K4me3) in vivo. The activity requires interaction with HSP90alpha. Shows even higher methyltransferase activity on p53/TP53. Monomethylates 'Lys-370' of p53/TP53, leading to decreased DNA-binding activity and subsequent transcriptional regulation activity of p53/TP53. Monomethylates RB1 at 'Lys-860'. The protein is N-lysine methyltransferase SMYD2-B (smyd2b) of Danio rerio (Zebrafish).